A 365-amino-acid chain; its full sequence is Chorismate synthase (365 aa).

R47 contacts NADP(+). FMN contacts are provided by residues 124 to 126, G287, 302 to 306, and R328; these read RAS and KPTAT.

The protein belongs to the chorismate synthase family. In terms of assembly, homotetramer. FMNH2 is required as a cofactor.

The enzyme catalyses 5-O-(1-carboxyvinyl)-3-phosphoshikimate = chorismate + phosphate. Its pathway is metabolic intermediate biosynthesis; chorismate biosynthesis; chorismate from D-erythrose 4-phosphate and phosphoenolpyruvate: step 7/7. In terms of biological role, catalyzes the anti-1,4-elimination of the C-3 phosphate and the C-6 proR hydrogen from 5-enolpyruvylshikimate-3-phosphate (EPSP) to yield chorismate, which is the branch point compound that serves as the starting substrate for the three terminal pathways of aromatic amino acid biosynthesis. This reaction introduces a second double bond into the aromatic ring system. This chain is Chorismate synthase, found in Prochlorococcus marinus (strain MIT 9215).